An 884-amino-acid polypeptide reads, in one-letter code: Microsomal triglyceride transfer protein large subunit (884 aa).

Residues 1 to 21 form the signal peptide; sequence MMPVAGLLLCVTAVLCTSALG. The Vitellogenin domain occupies 26–660; sequence LDNGKLYRYS…QSNNALLHGL (635 aa). Cys-172 and Cys-192 form a disulfide bridge. N-linked (GlcNAc...) asparagine glycosylation occurs at Asn-348. A disulfide bridge connects residues Cys-438 and Cys-443. Residue Asn-787 is glycosylated (N-linked (GlcNAc...) asparagine).

In terms of assembly, heterodimer; heterodimerizes with the protein disulfide isomerase. In terms of tissue distribution, highest expression in the proximal part of the anterior intestine. Lower expression in the distal part of the anterior intestine, in the posterior portion of the intestinal tube and liver. Very low expression levels in heart, brain, ovary, testis and kidney.

It localises to the endoplasmic reticulum. Its subcellular location is the golgi apparatus. The enzyme catalyses a 1,2-diacyl-sn-glycero-3-phosphocholine(in) = a 1,2-diacyl-sn-glycero-3-phosphocholine(out). It catalyses the reaction a 1,2-diacyl-sn-glycero-3-phosphoethanolamine(in) = a 1,2-diacyl-sn-glycero-3-phosphoethanolamine(out). It carries out the reaction a cholesterol ester(in) = a cholesterol ester(out). The catalysed reaction is a triacyl-sn-glycerol(in) = a triacyl-sn-glycerol(out). Its activity is regulated as follows. Inhibited by naringenin. Catalyzes the transport of triglyceride between phospholipid surfaces. Catalyzes the transport of cholesteryl ester, and phospholipid between phospholipid surfaces. Required for the assembly and secretion of plasma lipoproteins that contain apolipoprotein B. Required for yolk lipid utilization and absorption of dietary lipids in larvae. This Danio rerio (Zebrafish) protein is Microsomal triglyceride transfer protein large subunit.